The primary structure comprises 776 residues: Photosystem I P700 chlorophyll a apoprotein A1 (776 aa).

The next 8 membrane-spanning stretches (helical) occupy residues 76–99, 162–185, 201–225, 309–327, 368–391, 407–433, 455–477, and 557–575; these read IFSAHFGHLAIVFIWLSGAFFHGA, LMALATGALIMAGLVLHGGIFHYH, LQHHQIGLFGLGSLGWTGHLIHVAN, VAHHHLAWAVFLMFGGHVY, WHAQLAVNLACIGSGSIVVAHHMY, LGLFTHHMWIGGLMICGAAAHAGIAVI, AIISHLNWVCMFLGFHSFGLYIH, and LMIHHIHAFTIHVTCLILL. Cys-599 and Cys-608 together coordinate [4Fe-4S] cluster. Helical transmembrane passes span 615-636 and 690-712; these read HVFLGLFWMYNSLSMVIFYFSW and LSGYGLLFLGGHFVWAFSLMFLF. His-701 is a divinylchlorophyll a' binding site. 2 residues coordinate divinyl chlorophyll a: Met-709 and Tyr-717. Trp-718 provides a ligand contact to phylloquinone. Residues 750–770 form a helical membrane-spanning segment; the sequence is AVGVTHFLFGGIVTTWAFFHA.

It belongs to the PsaA/PsaB family. In terms of assembly, the PsaA/B heterodimer binds the P700 divinyl chlorophyll special pair and subsequent electron acceptors. PSI consists of a core antenna complex that captures photons, and an electron transfer chain that converts photonic excitation into a charge separation. The cyanobacterial PSI reaction center is composed of one copy each of PsaA,B,C,D,E,F,I,J,K,L,M and X, and forms trimeric complexes. PSI electron transfer chain: 5 divinyl chlorophyll a, 1 divinyl chlorophyll a', 2 phylloquinones and 3 4Fe-4S clusters. PSI core antenna: 90 divinyl chlorophyll a, 22 carotenoids, 3 phospholipids and 1 galactolipid. P700 is a divinyl chlorophyll a/divinyl chlorophyll a' dimer, A0 is one or more divinyl chlorophyll a, A1 is one or both phylloquinones and FX is a shared 4Fe-4S iron-sulfur center. serves as cofactor.

It localises to the cellular thylakoid membrane. The catalysed reaction is reduced [plastocyanin] + hnu + oxidized [2Fe-2S]-[ferredoxin] = oxidized [plastocyanin] + reduced [2Fe-2S]-[ferredoxin]. PsaA and PsaB bind P700, the primary electron donor of photosystem I (PSI), as well as the electron acceptors A0, A1 and FX. PSI is a plastocyanin/cytochrome c6-ferredoxin oxidoreductase, converting photonic excitation into a charge separation, which transfers an electron from the donor P700 chlorophyll pair to the spectroscopically characterized acceptors A0, A1, FX, FA and FB in turn. Oxidized P700 is reduced on the lumenal side of the thylakoid membrane by plastocyanin or cytochrome c6. This chain is Photosystem I P700 chlorophyll a apoprotein A1, found in Prochlorococcus marinus (strain MIT 9303).